A 373-amino-acid chain; its full sequence is Extensin-1 (373 aa).

The first 19 residues, methionine 1–alanine 19, serve as a signal peptide directing secretion. Repeat copies occupy residues serine 25–tyrosine 33, serine 34–lysine 40, serine 41–tyrosine 49, serine 50–lysine 56, serine 57–tyrosine 65, serine 66–lysine 72, serine 73–tyrosine 81, serine 82–lysine 88, serine 97–tyrosine 105, serine 106–lysine 112, serine 113–tyrosine 121, serine 122–lysine 128, serine 129–tyrosine 137, serine 138–lysine 144, serine 145–tyrosine 153, serine 154–lysine 160, serine 161–tyrosine 169, serine 170–lysine 176, serine 177–tyrosine 185, serine 186–lysine 192, serine 193–tyrosine 201, serine 202–lysine 208, serine 209–tyrosine 217, serine 218–lysine 224, serine 225–tyrosine 233, serine 234–lysine 240, serine 241–tyrosine 248, serine 249–histidine 256, serine 257–tyrosine 264, serine 265–histidine 272, serine 273–tyrosine 280, serine 281–histidine 288, serine 289–tyrosine 296, serine 297–histidine 304, serine 305–tyrosine 312, and serine 313–histidine 320. The interval serine 25–tyrosine 233 is 13 X 9 AA repeats of S-P-P-P-P-V-K-[HY]-Y. A 13 X 7 AA repeats of S-P-P-P-V-Y-K region spans residues serine 34–lysine 240. Residues serine 241–tyrosine 312 form a 5 X 8 AA repeats of S-P-P-P-P-V-H-Y region. A 5 X 8 AA repeats of S-P-P-P-V-V-Y-H region spans residues serine 249 to histidine 320. 2 isodityrosine cross-linking regions span residues tyrosine 329–lysine 332 and tyrosine 363–lysine 366. The disordered stretch occupies residues proline 349–tyrosine 373.

This sequence belongs to the extensin family. Extensins contain a characteristic repeat of the pentapeptide Ser-Pro(4). For this particular extensin, a typical repeat of Ser-Pro(3) is found. In both cases, the proline residues are hydroxylated and then O-glycosylated (arabinosylation). In terms of processing, synthetised as soluble proteins which become insolubilised in the cell wall through the intermolecular cross-linking of Tyr on adjacent monomers. Isodityrosine (IDT) stabilizes and makes rigid the part of the polypeptide where IDT functional sites are present. Predominantly expressed in the roots. Not detected in the leaves, nor in flowers or flower buds. Wounding reverses this pattern, turning on the gene in the leaves and repressing it in the roots.

The protein resides in the secreted. It localises to the primary cell wall. In terms of biological role, structural component which strengthens the primary cell wall. The protein is Extensin-1 of Arabidopsis thaliana (Mouse-ear cress).